The chain runs to 103 residues: Large ribosomal subunit protein bL21 (103 aa).

This sequence belongs to the bacterial ribosomal protein bL21 family. In terms of assembly, part of the 50S ribosomal subunit. Contacts protein L20.

This protein binds to 23S rRNA in the presence of protein L20. This is Large ribosomal subunit protein bL21 from Legionella pneumophila (strain Paris).